Here is a 437-residue protein sequence, read N- to C-terminus: uncharacterized protein (437 aa).

Transmembrane regions (helical) follow at residues 102 to 122 (GIYM…PVII) and 272 to 292 (ILSI…ATVW).

This sequence belongs to the herpesviridae UL49 family.

It localises to the host membrane. This is an uncharacterized protein from Connochaetes taurinus (Blue wildebeest).